Here is a 90-residue protein sequence, read N- to C-terminus: UPF0223 protein LMHCC_1569 (90 aa).

The protein belongs to the UPF0223 family.

The polypeptide is UPF0223 protein LMHCC_1569 (Listeria monocytogenes serotype 4a (strain HCC23)).